The primary structure comprises 147 residues: Cytochrome c' (147 aa).

The first 21 residues, 1–21 (MKRMMIVAALAALTTTTVAQA), serve as a signal peptide directing secretion. 6 residues coordinate heme c: arginine 31, threonine 87, glutamate 88, cysteine 137, cysteine 140, and histidine 141.

In terms of assembly, homodimer. Post-translationally, binds 1 heme c group covalently per subunit.

Cytochrome c' is the most widely occurring bacterial c-type cytochrome. Cytochromes c' are high-spin proteins and the heme has no sixth ligand. Their exact function is not known. In Rhodospirillum rubrum (strain ATCC 11170 / ATH 1.1.1 / DSM 467 / LMG 4362 / NCIMB 8255 / S1), this protein is Cytochrome c'.